Here is a 414-residue protein sequence, read N- to C-terminus: 2,3-diketo-5-methylthiopentyl-1-phosphate enolase (414 aa).

Lysine 99 acts as the Proton acceptor in catalysis. Substrate is bound by residues lysine 148, 174–177 (KDDE), histidine 265, glycine 338, and 360–361 (GG). Positions 174, 176, and 177 each coordinate Mg(2+). N6-carboxylysine is present on lysine 174.

Belongs to the RuBisCO large chain family. Type IV subfamily. Homodimer. It depends on Mg(2+) as a cofactor.

It carries out the reaction 5-methylsulfanyl-2,3-dioxopentyl phosphate = 2-hydroxy-5-methylsulfanyl-3-oxopent-1-enyl phosphate. It participates in amino-acid biosynthesis; L-methionine biosynthesis via salvage pathway; L-methionine from S-methyl-5-thio-alpha-D-ribose 1-phosphate: step 3/6. Its function is as follows. Catalyzes the enolization of 2,3-diketo-5-methylthiopentyl-1-phosphate (DK-MTP-1-P) into 2-hydroxy-3-keto-5-methylthiopentenyl-1-phosphate (HK-MTPenyl-1-P). This chain is 2,3-diketo-5-methylthiopentyl-1-phosphate enolase, found in Bacillus cereus (strain AH820).